The chain runs to 427 residues: Membrane-bound hydrogenase subunit alpha (427 aa).

Ni(2+) contacts are provided by Cys-68, Cys-71, Cys-374, and Cys-377.

It belongs to the complex I 49 kDa subunit family. In terms of assembly, the membrane-bound hydrogenase complex is composed of MbhK and MbhL, and may also contain MbhJ. Ni(2+) is required as a cofactor.

Its subcellular location is the cell membrane. It catalyses the reaction H2 + 2 oxidized [2Fe-2S]-[ferredoxin] = 2 reduced [2Fe-2S]-[ferredoxin] + 2 H(+). Inhibited by 0.1 mM Cu(2+). In terms of biological role, alpha subunit of a hydrogen-evolving hydrogenase that utilizes protons both as a substrate for hydrogen production and proton translocation. Acts by coupling the redox reaction via ferredoxin and iron-sulfur (Fe-S) clusters to proton translocation across the membrane thereby conserving the redox energy in a proton gradient. This chain is Membrane-bound hydrogenase subunit alpha, found in Pyrococcus furiosus (strain ATCC 43587 / DSM 3638 / JCM 8422 / Vc1).